A 102-amino-acid polypeptide reads, in one-letter code: Large ribosomal subunit protein mL63 (102 aa).

This sequence belongs to the mitochondrion-specific ribosomal protein mL63 family. As to quaternary structure, component of the mitochondrial large ribosomal subunit (mt-LSU). Mature mammalian 55S mitochondrial ribosomes consist of a small (28S) and a large (39S) subunit. The 28S small subunit contains a 12S ribosomal RNA (12S mt-rRNA) and 30 different proteins. The 39S large subunit contains a 16S rRNA (16S mt-rRNA), a copy of mitochondrial valine transfer RNA (mt-tRNA(Val)), which plays an integral structural role, and 52 different proteins.

The protein resides in the mitochondrion. This is Large ribosomal subunit protein mL63 (MRPL57) from Homo sapiens (Human).